The sequence spans 332 residues: Glycerol-3-phosphate dehydrogenase [NAD(P)+] (332 aa).

NADPH contacts are provided by W11, R30, and K108. Sn-glycerol 3-phosphate contacts are provided by K108, G137, and S139. A141 contributes to the NADPH binding site. Sn-glycerol 3-phosphate-binding residues include K192, D245, S255, R256, and N257. Catalysis depends on K192, which acts as the Proton acceptor. Position 256 (R256) interacts with NADPH. The NADPH site is built by V280 and E282.

This sequence belongs to the NAD-dependent glycerol-3-phosphate dehydrogenase family.

It is found in the cytoplasm. The enzyme catalyses sn-glycerol 3-phosphate + NAD(+) = dihydroxyacetone phosphate + NADH + H(+). The catalysed reaction is sn-glycerol 3-phosphate + NADP(+) = dihydroxyacetone phosphate + NADPH + H(+). Its pathway is membrane lipid metabolism; glycerophospholipid metabolism. Its function is as follows. Catalyzes the reduction of the glycolytic intermediate dihydroxyacetone phosphate (DHAP) to sn-glycerol 3-phosphate (G3P), the key precursor for phospholipid synthesis. This chain is Glycerol-3-phosphate dehydrogenase [NAD(P)+], found in Burkholderia ambifaria (strain MC40-6).